The chain runs to 581 residues: MKSHIQSLLEQTIESFKQQGILPADFEARIQVDRTKDKSHGDLATNLAMMLTKVAGKNPRELAQLIIDTLPASAFVAKVEIAGPGFINFFINDSALADQLQNAVNDEHLGIKLPTPQTVVVDYSSPNLAKEMHVGHLRSTIIGDSVVRALEFLGHKVIRQNHVGDWGTQFGMLLAYMEELRAKNGEQAHLELSDLETFYRAAKLRFDESAEFATRARQLVVELQSGDEYCNKLWREFNDISLSHCHEVYARLGVSLTRADVHGESAYNADLEQVVKDLDAQGLLTESNGAKVVFQEAFRNKEGEALPVIIQKADGGYLYATSDLAAMRYRSNVLKADRVLYFVDLRQALHFQQVFSLAKLAKFVREDMSLEHLGFGTMNGEDGRPFKTRSGGVVKLVDLLEEANVRALELVRSKNPDMDEETLAEIARVVGISAVKYADLSKNRTSDYIFSFEQMLSFEGNTAPYLLYAYTRVAGIFKRVTGLDLSQAKIVLEHEKEKDLGNKLAQFGEILNRVVDKGQPHVLCAYLYELAGAFSSFYEACPVLAADNDEQKNSRLLLSQLTARTLQKGLNLLGIETLERM.

Positions 126 to 136 match the 'HIGH' region motif; it reads PNLAKEMHVGH.

This sequence belongs to the class-I aminoacyl-tRNA synthetase family. As to quaternary structure, monomer.

The protein localises to the cytoplasm. The enzyme catalyses tRNA(Arg) + L-arginine + ATP = L-arginyl-tRNA(Arg) + AMP + diphosphate. The sequence is that of Arginine--tRNA ligase from Shewanella putrefaciens (strain CN-32 / ATCC BAA-453).